The following is a 314-amino-acid chain: Thymidylate synthase (314 aa).

DUMP contacts are provided by residues Arg21 and 176 to 177 (RR). Cys196 serves as the catalytic Nucleophile. DUMP is bound by residues 216-219 (RSAD), Asn227, and 257-259 (HLY). Asp219 contributes to the (6R)-5,10-methylene-5,6,7,8-tetrahydrofolate binding site. Ser313 contributes to the (6R)-5,10-methylene-5,6,7,8-tetrahydrofolate binding site.

It belongs to the thymidylate synthase family. Bacterial-type ThyA subfamily. As to quaternary structure, homodimer.

It localises to the cytoplasm. The catalysed reaction is dUMP + (6R)-5,10-methylene-5,6,7,8-tetrahydrofolate = 7,8-dihydrofolate + dTMP. Its pathway is pyrimidine metabolism; dTTP biosynthesis. Catalyzes the reductive methylation of 2'-deoxyuridine-5'-monophosphate (dUMP) to 2'-deoxythymidine-5'-monophosphate (dTMP) while utilizing 5,10-methylenetetrahydrofolate (mTHF) as the methyl donor and reductant in the reaction, yielding dihydrofolate (DHF) as a by-product. This enzymatic reaction provides an intracellular de novo source of dTMP, an essential precursor for DNA biosynthesis. This is Thymidylate synthase from Listeria monocytogenes serotype 4a (strain HCC23).